We begin with the raw amino-acid sequence, 205 residues long: DNA-directed RNA polymerases IV and V subunit 4 (205 aa).

The tract at residues 1 to 79 (MSEKGGKGLK…TKSSKNSLHS (79 aa)) is disordered. The segment covering 48–60 (NVSSDQQPFQSSA) has biased composition (polar residues).

This sequence belongs to the eukaryotic RPB4 RNA polymerase subunit family. In terms of assembly, component of the RNA polymerase IV and V complexes. Interacts with NRPD1 and NRPE1. In terms of tissue distribution, expressed in shoot meristematic region and in root tips. Detected in cotyledons, flowers and young leaves.

It localises to the nucleus. In terms of biological role, DNA-dependent RNA polymerase catalyzes the transcription of DNA into RNA using the four ribonucleoside triphosphates as substrates. Component of RNA polymerases IV and V which mediate short-interfering RNAs (siRNA) accumulation and subsequent RNA-directed DNA methylation-dependent (RdDM) transcriptional gene silencing (TGS) of endogenous repeated sequences, including transposable elements. Required for the de novo DNA methylation directed by the RdDM pathway. The polypeptide is DNA-directed RNA polymerases IV and V subunit 4 (NRPD4) (Arabidopsis thaliana (Mouse-ear cress)).